Reading from the N-terminus, the 219-residue chain is Capsid protein (219 aa).

The nuclear localization signals stretch occupies residues 5-29 (RRRRVVRRRKPVRRLRRRRRRFFKR).

This sequence belongs to the circoviridae capsid protein family. Homomultimer. Assembles in the nucleus, presumably in an immature form, then migrates to the cytoplasm once assembled as mature virion. Interacts with Rep; this interaction relocates Rep into the nucleus.

It is found in the host nucleus. Its subcellular location is the virion. Self-assembles to form the virion icosahedral capsid with a T=1 symmetry. This very small capsid (17-22 nm in diameter) allows the virus to be very stable in the environment and resistant to some disinfectants, including detergents. Essential for the initial attachment to heparan sulfate moieties and chondroitin sulfate B of the host cell surface proteoglycans. After attachment, the virus is endocytosed and traffics to the nucleus. The capsid protein binds and transports the viral genome and Rep across the nuclear envelope. The chain is Capsid protein (Cap) from Homo sapiens (Human).